A 252-amino-acid polypeptide reads, in one-letter code: Isoprenyl transferase (252 aa).

Aspartate 32 is an active-site residue. Mg(2+) is bound at residue aspartate 32. Substrate is bound by residues 33 to 36 (GNGR), tryptophan 37, arginine 45, histidine 49, and 77 to 79 (STE). Catalysis depends on asparagine 80, which acts as the Proton acceptor. Substrate contacts are provided by residues tryptophan 81, arginine 83, arginine 200, and 206-208 (RLS). Glutamate 219 is a binding site for Mg(2+).

The protein belongs to the UPP synthase family. Homodimer. Requires Mg(2+) as cofactor.

Its function is as follows. Catalyzes the condensation of isopentenyl diphosphate (IPP) with allylic pyrophosphates generating different type of terpenoids. This Listeria monocytogenes serovar 1/2a (strain ATCC BAA-679 / EGD-e) protein is Isoprenyl transferase.